A 188-amino-acid chain; its full sequence is Phosphoheptose isomerase (188 aa).

The 156-residue stretch at 33 to 188 (VTASLRAGGK…CGLVEDALCS (156 aa)) folds into the SIS domain. 48–50 (NGG) provides a ligand contact to substrate. His-57 and Glu-61 together coordinate Zn(2+). Residues Glu-61, 90 to 91 (ND), 116 to 118 (STS), Ser-121, and Gln-168 contribute to the substrate site. Residues Gln-168 and His-176 each contribute to the Zn(2+) site.

The protein belongs to the SIS family. GmhA subfamily. Homotetramer. The cofactor is Zn(2+).

The protein localises to the cytoplasm. It catalyses the reaction 2 D-sedoheptulose 7-phosphate = D-glycero-alpha-D-manno-heptose 7-phosphate + D-glycero-beta-D-manno-heptose 7-phosphate. It functions in the pathway carbohydrate biosynthesis; D-glycero-D-manno-heptose 7-phosphate biosynthesis; D-glycero-alpha-D-manno-heptose 7-phosphate and D-glycero-beta-D-manno-heptose 7-phosphate from sedoheptulose 7-phosphate: step 1/1. In terms of biological role, catalyzes the isomerization of sedoheptulose 7-phosphate in D-glycero-D-manno-heptose 7-phosphate. The sequence is that of Phosphoheptose isomerase from Rhodospirillum rubrum (strain ATCC 11170 / ATH 1.1.1 / DSM 467 / LMG 4362 / NCIMB 8255 / S1).